The sequence spans 924 residues: Ubiquitin carboxyl-terminal hydrolase 5 (924 aa).

The DUSP domain maps to 15 to 145; the sequence is LSPEEERVFI…GPTLARRVIS (131 aa). The span at 64-83 shows a compositional bias: polar residues; the sequence is TNDGSSLSEHCDSPGSSTLK. The tract at residues 64–87 is disordered; it reads TNDGSSLSEHCDSPGSSTLKKPSR. The 600-residue stretch at 317–916 folds into the USP domain; sequence TGLLNLGNTC…AAYVLFYRRK (600 aa). C326 functions as the Nucleophile in the catalytic mechanism. The segment covering 648 to 667 has biased composition (basic and acidic residues); sequence REESVGKKGNSDSSIPERRS. The segment at 648–690 is disordered; it reads REESVGKKGNSDSSIPERRSARFNNTEEEDKVGGLKKAKKSNS. The active-site Proton acceptor is H874.

It belongs to the peptidase C19 family.

The enzyme catalyses Thiol-dependent hydrolysis of ester, thioester, amide, peptide and isopeptide bonds formed by the C-terminal Gly of ubiquitin (a 76-residue protein attached to proteins as an intracellular targeting signal).. In terms of biological role, recognizes and hydrolyzes the peptide bond at the C-terminal Gly of ubiquitin. Involved in the processing of poly-ubiquitin precursors as well as that of ubiquitinated proteins. The protein is Ubiquitin carboxyl-terminal hydrolase 5 (UBP5) of Arabidopsis thaliana (Mouse-ear cress).